A 237-amino-acid chain; its full sequence is MTRGEMKYEGKAKRVYATENPHEYVVEYKDDATAFNAQKRGEWAGKGATNNAITAHLYPQLEAAGIPTHFLEKLSDREQRVKAVTIVPVEVIVRNVAAGSFSKRLGVEEGTPLPRPVVEYCYKSDALGDPLINTDTAVALGWASEDDLKRIRELALQIRDFLVPYFEKRGVRLIDFKLEFGKLPSGEIVLADEISPDTCRFWDAETNEKMDKDRFRRDLGGEAEAYAEMLKRVTREV.

Belongs to the SAICAR synthetase family.

It catalyses the reaction 5-amino-1-(5-phospho-D-ribosyl)imidazole-4-carboxylate + L-aspartate + ATP = (2S)-2-[5-amino-1-(5-phospho-beta-D-ribosyl)imidazole-4-carboxamido]succinate + ADP + phosphate + 2 H(+). The protein operates within purine metabolism; IMP biosynthesis via de novo pathway; 5-amino-1-(5-phospho-D-ribosyl)imidazole-4-carboxamide from 5-amino-1-(5-phospho-D-ribosyl)imidazole-4-carboxylate: step 1/2. The chain is Phosphoribosylaminoimidazole-succinocarboxamide synthase from Deinococcus radiodurans (strain ATCC 13939 / DSM 20539 / JCM 16871 / CCUG 27074 / LMG 4051 / NBRC 15346 / NCIMB 9279 / VKM B-1422 / R1).